We begin with the raw amino-acid sequence, 134 residues long: MINLLVENNNSNWDKIFSFVFDIFLFIFDVIWNTKLPMTNTSIAYFLIFFMVIKLSIYAIHGTSTQYNNLGSTVNNGVSQVYSSTVRGVSDTKQGMQKHIKERKQFKINRNKKQLSSLAKQAKTREQGYRRVHK.

The next 2 helical transmembrane spans lie at 16–36 (IFSF…NTKL) and 43–63 (IAYF…IHGT).

This sequence belongs to the plectrovirus ORF5 family.

The protein resides in the host membrane. This is an uncharacterized protein from Spiroplasma citri (SpV1).